The primary structure comprises 193 residues: dTTP/UTP pyrophosphatase (193 aa).

The active-site Proton acceptor is the aspartate 73.

The protein belongs to the Maf family. YhdE subfamily. Requires a divalent metal cation as cofactor.

It is found in the cytoplasm. The catalysed reaction is dTTP + H2O = dTMP + diphosphate + H(+). The enzyme catalyses UTP + H2O = UMP + diphosphate + H(+). Nucleoside triphosphate pyrophosphatase that hydrolyzes dTTP and UTP. May have a dual role in cell division arrest and in preventing the incorporation of modified nucleotides into cellular nucleic acids. This chain is dTTP/UTP pyrophosphatase, found in Caulobacter vibrioides (strain ATCC 19089 / CIP 103742 / CB 15) (Caulobacter crescentus).